A 227-amino-acid polypeptide reads, in one-letter code: Orotidine 5'-phosphate decarboxylase (227 aa).

Substrate-binding positions include Asp-8, Lys-30, 59-68 (DLKLYDIPYT), Thr-118, Arg-178, Gln-187, Gly-207, and Arg-208. The active-site Proton donor is the Lys-61.

It belongs to the OMP decarboxylase family. Type 1 subfamily. As to quaternary structure, homodimer.

The enzyme catalyses orotidine 5'-phosphate + H(+) = UMP + CO2. Its pathway is pyrimidine metabolism; UMP biosynthesis via de novo pathway; UMP from orotate: step 2/2. Functionally, catalyzes the decarboxylation of orotidine 5'-monophosphate (OMP) to uridine 5'-monophosphate (UMP). This chain is Orotidine 5'-phosphate decarboxylase, found in Helicobacter pylori (strain P12).